We begin with the raw amino-acid sequence, 152 residues long: Large ribosomal subunit protein eL14 (152 aa).

It belongs to the eukaryotic ribosomal protein eL14 family.

The polypeptide is Large ribosomal subunit protein eL14 (RPL14) (Lumbricus rubellus (Humus earthworm)).